The following is a 173-amino-acid chain: HAM34 protein (173 aa).

Over residues 22–89 (AAPATTPDTA…ADGTQTATAP (68 aa)) the composition is skewed to low complexity. The segment at 22-155 (AAPATTPDTA…ATDTTSGASH (134 aa)) is disordered. The segment covering 95 to 133 (TEESSASGEMTPTVGTDTSDQVSDSTAAGPSTPEGSMTG) has biased composition (polar residues). The segment covering 134-155 (TSTPKASDSSSSATDTTSGASH) has biased composition (low complexity).

In terms of tissue distribution, germinating spores.

Functionally, could be a structural protein required for the infection process of B.lactucae. In Bremia lactucae (Lettuce downy mildew), this protein is HAM34 protein (HAM34).